A 1117-amino-acid chain; its full sequence is Isoleucine--tRNA ligase (1117 aa).

Residues 64–74 (PFANGLPHYGH) carry the 'HIGH' region motif. A 'KMSKS' region motif is present at residues 647–651 (KLSKR). Residue Lys-650 coordinates ATP.

The protein belongs to the class-I aminoacyl-tRNA synthetase family. IleS type 2 subfamily. In terms of assembly, monomer. Requires Zn(2+) as cofactor.

The protein localises to the cytoplasm. The catalysed reaction is tRNA(Ile) + L-isoleucine + ATP = L-isoleucyl-tRNA(Ile) + AMP + diphosphate. Its function is as follows. Catalyzes the attachment of isoleucine to tRNA(Ile). As IleRS can inadvertently accommodate and process structurally similar amino acids such as valine, to avoid such errors it has two additional distinct tRNA(Ile)-dependent editing activities. One activity is designated as 'pretransfer' editing and involves the hydrolysis of activated Val-AMP. The other activity is designated 'posttransfer' editing and involves deacylation of mischarged Val-tRNA(Ile). This chain is Isoleucine--tRNA ligase, found in Ehrlichia ruminantium (strain Welgevonden).